A 108-amino-acid chain; its full sequence is FK506-binding protein 1 (108 aa).

Positions 20–108 constitute a PPIase FKBP-type domain; that stretch reads GDNVTIHYVG…KFEVELLKVN (89 aa).

Belongs to the FKBP-type PPIase family. FKBP1 subfamily.

Its subcellular location is the cytoplasm. It catalyses the reaction [protein]-peptidylproline (omega=180) = [protein]-peptidylproline (omega=0). Inhibited by both FK506 and rapamycin. Its function is as follows. PPIases accelerate the folding of proteins. It catalyzes the cis-trans isomerization of proline imidic peptide bonds in oligopeptides. In Cryptococcus neoformans var. grubii serotype A (strain H99 / ATCC 208821 / CBS 10515 / FGSC 9487) (Filobasidiella neoformans var. grubii), this protein is FK506-binding protein 1 (FRR1).